Consider the following 425-residue polypeptide: UPF0761 membrane protein xcc-b100_3490 (425 aa).

6 helical membrane passes run 48–68, 105–125, 154–174, 182–202, 216–236, and 250–270; these read VFAL…FPAF, FTVA…HSIE, GTML…LPLF, LAEF…IVLI, ALPG…GFGF, and ALSA…SVLL.

The protein belongs to the UPF0761 family.

It is found in the cell inner membrane. The polypeptide is UPF0761 membrane protein xcc-b100_3490 (Xanthomonas campestris pv. campestris (strain B100)).